A 969-amino-acid chain; its full sequence is Dual serine/threonine and tyrosine protein kinase (969 aa).

A coiled-coil region spans residues 7–37 (QEFRRYLRNRNQLQHVLEETQQALELINLEN). Residues 632 to 894 (PHCAEEIGRG…PLLGAIVPVL (263 aa)) enclose the Protein kinase domain. ATP is bound by residues 638–646 (IGRGQYGIV) and lysine 662. Aspartate 760 (proton acceptor) is an active-site residue. A disordered region spans residues 904–945 (SKSLQEVSSDKLQESSTDSRNPALALAEPYNQRGTVVSPPPT).

It belongs to the protein kinase superfamily. Ser/Thr protein kinase family.

The protein localises to the cytoplasm. It catalyses the reaction L-seryl-[protein] + ATP = O-phospho-L-seryl-[protein] + ADP + H(+). The catalysed reaction is L-threonyl-[protein] + ATP = O-phospho-L-threonyl-[protein] + ADP + H(+). It carries out the reaction L-tyrosyl-[protein] + ATP = O-phospho-L-tyrosyl-[protein] + ADP + H(+). In Apis mellifera (Honeybee), this protein is Dual serine/threonine and tyrosine protein kinase.